Consider the following 339-residue polypeptide: MIKVAAAGGGTGGHLYPLLAILETLAKRVDVKVLFFAVKGKIDERVVRKDHPEFETVSIDVRGLLRPLHHPKNLWRTLKIGIATIEVKKHLKRFKPDLVVLTGGYISGVVGLAAKDLGIPIFVHEQNVVPGLAVKVLSQYAKKVFVSFERTRDYLREWQDKIVVTGCPVRETEKEAPLKDFVLVLGGSLGSEAINELMEKVYPELQETQFVHSTGSDDWTERLSVFPNVTALTYIDPMGAYWKKAIASISRAGASTIAEMMYYGVPGILIPWESSAESHQLENALEAERLGYGIVIRENEASPRKIIESIDKVVKKGKIEKMKENPASKISEEILGEIM.

Residues 11–13, Asn-127, Arg-170, Ser-188, Ile-235, and Gln-280 contribute to the UDP-N-acetyl-alpha-D-glucosamine site; that span reads TGG.

The protein belongs to the glycosyltransferase 28 family. MurG subfamily.

Its subcellular location is the cell inner membrane. It carries out the reaction di-trans,octa-cis-undecaprenyl diphospho-N-acetyl-alpha-D-muramoyl-L-alanyl-D-glutamyl-meso-2,6-diaminopimeloyl-D-alanyl-D-alanine + UDP-N-acetyl-alpha-D-glucosamine = di-trans,octa-cis-undecaprenyl diphospho-[N-acetyl-alpha-D-glucosaminyl-(1-&gt;4)]-N-acetyl-alpha-D-muramoyl-L-alanyl-D-glutamyl-meso-2,6-diaminopimeloyl-D-alanyl-D-alanine + UDP + H(+). It functions in the pathway cell wall biogenesis; peptidoglycan biosynthesis. Cell wall formation. Catalyzes the transfer of a GlcNAc subunit on undecaprenyl-pyrophosphoryl-MurNAc-pentapeptide (lipid intermediate I) to form undecaprenyl-pyrophosphoryl-MurNAc-(pentapeptide)GlcNAc (lipid intermediate II). The polypeptide is UDP-N-acetylglucosamine--N-acetylmuramyl-(pentapeptide) pyrophosphoryl-undecaprenol N-acetylglucosamine transferase (Thermotoga petrophila (strain ATCC BAA-488 / DSM 13995 / JCM 10881 / RKU-1)).